Here is a 137-residue protein sequence, read N- to C-terminus: Small ribosomal subunit protein uS12 (137 aa).

A disordered region spans residues 1-43; sequence MPTINQLVRKGRVSKTKKSDSPALNKGYNSFKKRMTDQNAPQK.

This sequence belongs to the universal ribosomal protein uS12 family. In terms of assembly, part of the 30S ribosomal subunit. Contacts proteins S8 and S17. May interact with IF1 in the 30S initiation complex.

With S4 and S5 plays an important role in translational accuracy. Its function is as follows. Interacts with and stabilizes bases of the 16S rRNA that are involved in tRNA selection in the A site and with the mRNA backbone. Located at the interface of the 30S and 50S subunits, it traverses the body of the 30S subunit contacting proteins on the other side and probably holding the rRNA structure together. The combined cluster of proteins S8, S12 and S17 appears to hold together the shoulder and platform of the 30S subunit. This chain is Small ribosomal subunit protein uS12, found in Oceanobacillus iheyensis (strain DSM 14371 / CIP 107618 / JCM 11309 / KCTC 3954 / HTE831).